The sequence spans 362 residues: Sulfate/thiosulfate import ATP-binding protein CysA (362 aa).

The 231-residue stretch at 13–243 folds into the ABC transporter domain; sequence ITVRDAYKRY…PTNAFVMSFL (231 aa). An ATP-binding site is contributed by 45–52; it reads GPSGSGKS.

It belongs to the ABC transporter superfamily. Sulfate/tungstate importer (TC 3.A.1.6) family. In terms of assembly, the complex is composed of two ATP-binding proteins (CysA), two transmembrane proteins (CysT and CysW) and a solute-binding protein (CysP).

The protein resides in the cell membrane. It catalyses the reaction sulfate(out) + ATP + H2O = sulfate(in) + ADP + phosphate + H(+). The enzyme catalyses thiosulfate(out) + ATP + H2O = thiosulfate(in) + ADP + phosphate + H(+). In terms of biological role, part of the ABC transporter complex CysAWTP involved in sulfate/thiosulfate import. Responsible for energy coupling to the transport system. This chain is Sulfate/thiosulfate import ATP-binding protein CysA, found in Mycolicibacterium paratuberculosis (strain ATCC BAA-968 / K-10) (Mycobacterium paratuberculosis).